The sequence spans 299 residues: Ribosome-inactivating protein saporin-6 (299 aa).

An N-terminal signal peptide occupies residues 1 to 24 (MKIYVVATIAWILLQFSAWTTTDA). Glu-200 is an active-site residue. Residues 278 to 299 (SSNEANSTVRHYGPLKPTLLIT) constitute a propeptide that is removed on maturation. N-linked (GlcNAc...) asparagine glycosylation occurs at Asn-283.

It belongs to the ribosome-inactivating protein family. Type 1 RIP subfamily. Seeds and leaves of the plant.

It catalyses the reaction Endohydrolysis of the N-glycosidic bond at one specific adenosine on the 28S rRNA.. In terms of biological role, ribosome-inactivating protein of type 1, inhibits protein synthesis in animal cells. Useful as immunotoxin for pharmacological applications. The polypeptide is Ribosome-inactivating protein saporin-6 (SAP6) (Saponaria officinalis (Common soapwort)).